The sequence spans 153 residues: Antibacterial peptide PMAP-23 (153 aa).

The first 29 residues, 1-29 (METQRASLCLGRWSLWLLLLGLVVPSASA), serve as a signal peptide directing secretion. Position 30 is a pyrrolidone carboxylic acid (Gln-30). The propeptide occupies 30–130 (QALSYREAVL…DITCNQLQSV (101 aa)). Positions 61–80 (DQPPKADEDPGTPKPVSFTV) are disordered. Intrachain disulfides connect Cys-85-Cys-96 and Cys-107-Cys-124.

This sequence belongs to the cathelicidin family.

It localises to the secreted. Its function is as follows. Exerts antimicrobial activity against both Gram-positive and negative bacteria at concentrations of 2-16 micro molar. Its activity appears to be mediated by its ability to damage bacterial membranes. This Sus scrofa (Pig) protein is Antibacterial peptide PMAP-23 (PMAP23).